The following is a 380-amino-acid chain: Alpha-N-acetylneuraminate alpha-2,8-sialyltransferase ST8SIA3 (380 aa).

At 1-9 the chain is on the cytoplasmic side; that stretch reads MRNCKMARV. Residues 10-33 traverse the membrane as a helical; Signal-anchor for type II membrane protein segment; it reads ASVLGLVMLSVALLNLSLISYVSL. The Lumenal segment spans residues 34–380; the sequence is KKENIFATPK…LTKLTLSHCA (347 aa). N-linked (GlcNAc...) asparagine glycans are attached at residues asparagine 93 and asparagine 113. Cystine bridges form between cysteine 162–cysteine 313 and cysteine 176–cysteine 379. CMP-N-acetyl-beta-neuraminate-binding residues include asparagine 167 and asparagine 190. Residue asparagine 206 is glycosylated (N-linked (GlcNAc...) asparagine). Serine 300, threonine 301, glycine 302, tryptophan 322, tyrosine 336, and histidine 337 together coordinate CMP-N-acetyl-beta-neuraminate. Histidine 354 (proton donor/acceptor) is an active-site residue.

Belongs to the glycosyltransferase 29 family. As to quaternary structure, homodimer. Autopolysialylated.

Its subcellular location is the golgi apparatus membrane. It carries out the reaction [N-acetyl-alpha-D-neuraminosyl-(2-&gt;8)](n) + CMP-N-acetyl-beta-neuraminate = [N-acetyl-alpha-D-neuraminosyl-(2-&gt;8)](n+1) + CMP + H(+). The enzyme catalyses alpha-Neu5Ac-(2-&gt;3)-beta-D-Gal-(1-&gt;4)-6S-D-GlcNAc + CMP-N-acetyl-beta-neuraminate = alpha-Neu5Ac-(2-&gt;8)-alpha-Neu5Ac-(2-&gt;3)-beta-D-Gal-(1-&gt;4)-6S-D-GlcNAc + CMP + H(+). The catalysed reaction is a ganglioside GM3 (d18:1(4E)) + CMP-N-acetyl-beta-neuraminate = a ganglioside GD3 (d18:1(4E)) + CMP + H(+). It catalyses the reaction a ganglioside GM3 + CMP-N-acetyl-beta-neuraminate = a ganglioside GD3 + CMP + H(+). It carries out the reaction an N-acetyl-alpha-neuraminyl-(2-&gt;3)-beta-D-galactosyl derivative + CMP-N-acetyl-beta-neuraminate = an N-acetyl-alpha-neuraminyl-(2-&gt;8)-N-acetyl-alpha-neuraminyl-(2-&gt;3)-beta-D-galactosyl derivative + CMP + H(+). The enzyme catalyses an N-acetyl-alpha-neuraminyl-(2-&gt;3)-beta-D-galactosyl-(1-&gt;4)-N-acetyl-beta-D-glucosaminyl derivative + CMP-N-acetyl-beta-neuraminate = an alpha-Neu5Ac-(2-&gt;8)-alpha-Neu5Ac-(2-&gt;3)-beta-D-Gal-(1-&gt;4)-beta-D-GlcNAc derivative + CMP + H(+). The protein operates within protein modification; protein glycosylation. Functionally, catalyzes the transfer of sialic acid from a CMP-linked sialic acid donor onto a terminal alpha-2,3-, alpha-2,6-, or alpha-2,8-linked sialic acid of an acceptor, such as N-linked oligosaccharides of glycoproteins and glycolipids through alpha-2,8-linkages. Forms oligosialic and polysialic acid on various sialylated N-acetyllactosamine oligosaccharides of glycoproteins, including FETUB N-glycans, a2-HS-glycoprotein (AHSG) and alpha 2,3-sialylated glycosphingolipids, such as alpha 2,3-sialylparagloboside and ganglioside GM3 and to a lesser extent NCAM1 N-glycans. However, it is much more specific to N-linked oligosaccharides of glycoproteins than glycosphingolipids. 2,3-sialylparagloboside serves as the best acceptor substrate among the glycolipids. alpha-Neu5Ac-(2-&gt;8)-alpha-Neu5Ac-(2-&gt;3)-beta-D-Gal-(1-&gt;4)-6S-D-GlcNAc and monosialyl and disialyl N-acetyllactosamines are the best acceptor substrates among glycoproteins. May plays critical role in the striatum by mediating the formation of disialylated and trisialylated terminal glycotopes on N- and O-glycans of specific striatal proteins, regulating their distribution in lipid rafts, affecting their interaction with other binding partners, and subsequently modulating striatal functions. This chain is Alpha-N-acetylneuraminate alpha-2,8-sialyltransferase ST8SIA3, found in Pan troglodytes (Chimpanzee).